A 66-amino-acid polypeptide reads, in one-letter code: MALRTRLGEILRPLNAEYGKVVPGWGTTPIMGLTMVLFLVFLLIILQIYNSSLIIENVDVDWANAI.

The helical transmembrane segment at 29–49 (PIMGLTMVLFLVFLLIILQIY) threads the bilayer.

The protein belongs to the PsbH family. PSII is composed of 1 copy each of membrane proteins PsbA, PsbB, PsbC, PsbD, PsbE, PsbF, PsbH, PsbI, PsbJ, PsbK, PsbL, PsbM, PsbT, PsbX, PsbY, PsbZ, Psb30/Ycf12, at least 3 peripheral proteins of the oxygen-evolving complex and a large number of cofactors. It forms dimeric complexes.

The protein localises to the plastid. It is found in the chloroplast thylakoid membrane. Functionally, one of the components of the core complex of photosystem II (PSII), required for its stability and/or assembly. PSII is a light-driven water:plastoquinone oxidoreductase that uses light energy to abstract electrons from H(2)O, generating O(2) and a proton gradient subsequently used for ATP formation. It consists of a core antenna complex that captures photons, and an electron transfer chain that converts photonic excitation into a charge separation. In Thalassiosira pseudonana (Marine diatom), this protein is Photosystem II reaction center protein H.